Consider the following 472-residue polypeptide: FAD-dependent monooxygenase ltmM (472 aa).

The helical transmembrane segment at 7–27 (VIIVGGSVAGLSLAHCLEKIG) threads the bilayer. FAD contacts are provided by glutamate 34, glycine 48, and arginine 107. A glycan (N-linked (GlcNAc...) asparagine) is linked at asparagine 186. FAD-binding residues include aspartate 306 and alanine 319. The helical transmembrane segment at 450–470 (IVYALYLVAAAAFILYCLSSL) threads the bilayer.

This sequence belongs to the paxM FAD-dependent monooxygenase family. Requires FAD as cofactor.

It localises to the membrane. The protein operates within secondary metabolite biosynthesis. In terms of biological role, FAD-dependent monooxygenase; part of the gene cluster that mediates the biosynthesis of lolitrems, indole-diterpene mycotoxins that are potent tremorgens in mammals, and are synthesized by clavicipitaceous fungal endophytes in association with their grass hosts. The geranylgeranyl diphosphate (GGPP) synthase ltmG is proposed to catalyze the first step in lolitrem biosynthesis. LtmG catalyzes a series of iterative condensations of isopentenyl diphosphate (IPP) with dimethylallyl diphosphate (DMAPP), geranyl diphosphate (GPP), and farnesyl diphosphate (FPP), to form GGPP. GGPP then condenses with indole-3-glycerol phosphate to form 3-geranylgeranylindole, an acyclic intermediate, to be incorporated into paxilline. Either ltmG or ltmC could be responsible for this step, as both are putative prenyl transferases. The FAD-dependent monooxygenase ltmM then catalyzes the epoxidation of the two terminal alkenes of the geranylgeranyl moiety, which is subsequently cyclized by ltmC, to paspaline. The cytochrome P450 monooxygenases ltmQ and ltmP can sequentially oxidize paspaline to terpendole E and terpendole F. Alternatively, ltmP converts paspaline to an intermediate which is oxidized by ltmQ to terpendole F. LtmF, ltmK, ltmE and ltmJ appear to be unique to the epichloe endophytes. The prenyltransferase ltmF is involved in the 27-hydroxyl-O-prenylation. The cytochrome P450 monooxygenase ltmK is required for the oxidative acetal ring formation. The multi-functional prenyltransferase ltmE is required for C20- and C21-prenylations of the indole ring of paspalanes and acts together with the cytochrome P450 monooxygenase ltmJ to yield lolitremanes by multiple oxidations and ring closures. The stereoisomer pairs of lolitriol and lolitrem N or lolitrem B and lolitrem F may be attributed to variations in the way in which ring closure can occur under the action of ltmJ. While the major product of this pathway is lolitrem B, the prenyl transferases and cytochrome P450 monooxygenases identified in this pathway have a remarkable versatility in their regio- and stereo-specificities to generate a diverse range of metabolites that are products of a metabolic grid rather than a linear pathway. The protein is FAD-dependent monooxygenase ltmM (ltmM) of Epichloe festucae (strain Fl1).